We begin with the raw amino-acid sequence, 551 residues long: CTP synthase (551 aa).

Residues 1–265 (MTRYLFITGG…DHIVAEKWGL (265 aa)) form an amidoligase domain region. Position 13 (S13) interacts with CTP. S13 provides a ligand contact to UTP. ATP is bound by residues 14–19 (SLGKGI) and D71. 2 residues coordinate Mg(2+): D71 and E139. CTP contacts are provided by residues 146–148 (DIE), 186–191 (KTKPTQ), and K222. UTP-binding positions include 186 to 191 (KTKPTQ) and K222. The Glutamine amidotransferase type-1 domain maps to 290–541 (TVAMVGKYVD…LRAAIAHRDG (252 aa)). G351 is an L-glutamine binding site. C378 functions as the Nucleophile; for glutamine hydrolysis in the catalytic mechanism. L-glutamine contacts are provided by residues 379-382 (LGMQ), E402, and R469. Active-site residues include H514 and E516.

This sequence belongs to the CTP synthase family. Homotetramer.

It catalyses the reaction UTP + L-glutamine + ATP + H2O = CTP + L-glutamate + ADP + phosphate + 2 H(+). The enzyme catalyses L-glutamine + H2O = L-glutamate + NH4(+). It carries out the reaction UTP + NH4(+) + ATP = CTP + ADP + phosphate + 2 H(+). Its pathway is pyrimidine metabolism; CTP biosynthesis via de novo pathway; CTP from UDP: step 2/2. Allosterically activated by GTP, when glutamine is the substrate; GTP has no effect on the reaction when ammonia is the substrate. The allosteric effector GTP functions by stabilizing the protein conformation that binds the tetrahedral intermediate(s) formed during glutamine hydrolysis. Inhibited by the product CTP, via allosteric rather than competitive inhibition. Catalyzes the ATP-dependent amination of UTP to CTP with either L-glutamine or ammonia as the source of nitrogen. Regulates intracellular CTP levels through interactions with the four ribonucleotide triphosphates. This is CTP synthase from Halorhodospira halophila (strain DSM 244 / SL1) (Ectothiorhodospira halophila (strain DSM 244 / SL1)).